Here is a 435-residue protein sequence, read N- to C-terminus: FAD-dependent monooxygenase ATEG_07662 (435 aa).

A helical transmembrane segment spans residues 8 to 28; that stretch reads PLDVAIIGGGIIGIMTALGLL. FAD is bound by residues Glu-38, Ala-51, and Arg-119. Asn-191 carries N-linked (GlcNAc...) asparagine glycosylation. Residue Arg-201 is part of the active site. Residues Asp-317 and Ala-330 each coordinate FAD.

The protein belongs to the paxM FAD-dependent monooxygenase family. FAD serves as cofactor.

The protein resides in the membrane. The protein operates within secondary metabolite biosynthesis. Its function is as follows. FAD-dependent monooxygenase; part of the cluster B that mediates the biosynthesis of azasperpyranones, members of the azaphilone family that exhibit anti-cancer activities. Azasperpyranones are synthesized by 2 clusters, A and B. Cluster A is responsible for the production of the polyhydric phenol moiety while the azaphilonoid scaffold is produced by the cluster B. The non-reducing polyketide synthase ATEG_03629 produces 5-methyl orsellinic acid, which is then reduced to 5-methyl orsellinic aldehyde by the NRPS-like protein ATEG_03630. 5-methyl orsellinic aldehyde is then first hydroxylated by the FAD-dependent monooxygenase ATEG_03635 and subsequently hydroxylated by the cytochrome P450 monooxygenase ATEG_03631 to produce the unstable polyhydric phenol precursor of azasperpyranones. On the other hand, the polyketide synthase ATEG_07659 is responsible for producing the 3,5-dimethyloctadienone moiety from acetyl-CoA, three malonyl-CoA, and two S-adenosyl methionines (SAM). The 3,5-dimethyloctadienone moiety is then loaded onto the SAT domain of ATEG_07661 and extended with four malonyl-CoA and one SAM, which leads to the formation of 2,4-dihydroxy-6-(5,7-dimethyl-2-oxo-trans-3-trans-5-nonadienyl)-3-methylbenzaldehyde (compound 8) after reductive release and aldol condensation. The FAD-dependent monooxygenase ATEG_07662 is the next enzyme in the biosynthesis sequence and hydroxylates the side chain at the benzylic position of compound 8. In Aspergillus nidulans, afoF, the ortholog of the FAD-dependent oxygenase ATEG_07660, is the key enzyme for the biosynthesis of asperfuranone by catalyzing the hydroxylation at C-8 of to prevent the formation of a six-membered ring hemiacetal intermediate and thus facilitating the formation of a five-membered ring to produce asperfuranone. In Aspergillus terreus, ATEG_07660 is probably not functional, which leads to the formation of the six-membered ring hemiacetal intermediate presperpyranone instead of asperfuranone. Finally, ATEG_03636 is involved in the condensation of the polyhydric phenol moiety produced by cluster A and the perasperpyranone precursor produced by cluster B, to yield azasperpyranone A. Further modifications of azasperpyranone A result in the production of derivatives, including azasperpyranone B to F. This chain is FAD-dependent monooxygenase ATEG_07662, found in Aspergillus terreus (strain NIH 2624 / FGSC A1156).